Reading from the N-terminus, the 958-residue chain is Isoleucine--tRNA ligase (958 aa).

Residues 1-32 (MSDNQNKPGKPAAKPQSKYPVNMTDTPFPMRG) form a disordered region. Residues 71–81 (PYANGDIHLGH) carry the 'HIGH' region motif. Glutamate 590 is an L-isoleucyl-5'-AMP binding site. The 'KMSKS' region signature appears at 631 to 635 (KMSKS). Lysine 634 provides a ligand contact to ATP. Residues cysteine 921, cysteine 924, cysteine 941, and cysteine 944 each contribute to the Zn(2+) site.

This sequence belongs to the class-I aminoacyl-tRNA synthetase family. IleS type 1 subfamily. Monomer. Requires Zn(2+) as cofactor.

It is found in the cytoplasm. It carries out the reaction tRNA(Ile) + L-isoleucine + ATP = L-isoleucyl-tRNA(Ile) + AMP + diphosphate. Its function is as follows. Catalyzes the attachment of isoleucine to tRNA(Ile). As IleRS can inadvertently accommodate and process structurally similar amino acids such as valine, to avoid such errors it has two additional distinct tRNA(Ile)-dependent editing activities. One activity is designated as 'pretransfer' editing and involves the hydrolysis of activated Val-AMP. The other activity is designated 'posttransfer' editing and involves deacylation of mischarged Val-tRNA(Ile). This is Isoleucine--tRNA ligase from Janthinobacterium sp. (strain Marseille) (Minibacterium massiliensis).